The sequence spans 553 residues: Urocanate hydratase (553 aa).

NAD(+)-binding positions include 45 to 46 (GG), Gln123, 169 to 171 (GMG), Asp189, Arg194, 235 to 236 (NA), 256 to 260 (QTSAH), 266 to 267 (YV), Tyr315, and Gly485.

It belongs to the urocanase family. It depends on NAD(+) as a cofactor.

It is found in the cytoplasm. It carries out the reaction 4-imidazolone-5-propanoate = trans-urocanate + H2O. It functions in the pathway amino-acid degradation; L-histidine degradation into L-glutamate; N-formimidoyl-L-glutamate from L-histidine: step 2/3. Catalyzes the conversion of urocanate to 4-imidazolone-5-propionate. In Staphylococcus aureus (strain MRSA252), this protein is Urocanate hydratase.